Here is a 100-residue protein sequence, read N- to C-terminus: Ubiquitin-related modifier 1 (100 aa).

G100 carries the 1-thioglycine modification. G100 is covalently cross-linked (Glycyl lysine isopeptide (Gly-Lys) (interchain with K-? in acceptor proteins)).

This sequence belongs to the URM1 family. C-terminal thiocarboxylation occurs in 2 steps, it is first acyl-adenylated (-COAMP) via the hesA/moeB/thiF part of UBA4, then thiocarboxylated (-COSH) via the rhodanese domain of UBA4.

The protein localises to the cytoplasm. It functions in the pathway tRNA modification; 5-methoxycarbonylmethyl-2-thiouridine-tRNA biosynthesis. Functionally, acts as a sulfur carrier required for 2-thiolation of mcm(5)S(2)U at tRNA wobble positions of cytosolic tRNA(Lys), tRNA(Glu) and tRNA(Gln). Serves as sulfur donor in tRNA 2-thiolation reaction by being thiocarboxylated (-COSH) at its C-terminus by the MOCS3 homolog UBA4. The sulfur is then transferred to tRNA to form 2-thiolation of mcm(5)S(2)U. Prior mcm(5) tRNA modification by the elongator complex is required for 2-thiolation. Also acts as a ubiquitin-like protein (UBL) that is covalently conjugated via an isopeptide bond to lysine residues of target proteins such as AHP1. The thiocarboxylated form serves as substrate for conjugation and oxidative stress specifically induces the formation of UBL-protein conjugates. The sequence is that of Ubiquitin-related modifier 1 from Eremothecium gossypii (strain ATCC 10895 / CBS 109.51 / FGSC 9923 / NRRL Y-1056) (Yeast).